The primary structure comprises 96 residues: Growth-regulated alpha protein (96 aa).

The signal sequence occupies residues 1 to 24 (MVSATRSLLCAALPVLATSRQATG). Disulfide bonds link Cys33–Cys59 and Cys35–Cys75.

This sequence belongs to the intercrine alpha (chemokine CxC) family. In terms of assembly, monomer and homodimer. At least expressed in the lung and trachea.

Its subcellular location is the secreted. Has chemotactic activity for neutrophils. Contributes to neutrophil activation during inflammation. In Rattus norvegicus (Rat), this protein is Growth-regulated alpha protein (Cxcl1).